Reading from the N-terminus, the 110-residue chain is DNA-binding protein Mhun_3016 (110 aa).

The protein belongs to the PDCD5 family.

This is DNA-binding protein Mhun_3016 from Methanospirillum hungatei JF-1 (strain ATCC 27890 / DSM 864 / NBRC 100397 / JF-1).